The following is a 241-amino-acid chain: Pyridoxine 5'-phosphate synthase (241 aa).

N7 is a binding site for 3-amino-2-oxopropyl phosphate. 9–10 (DH) contacts 1-deoxy-D-xylulose 5-phosphate. A 3-amino-2-oxopropyl phosphate-binding site is contributed by R18. H43 (proton acceptor) is an active-site residue. 2 residues coordinate 1-deoxy-D-xylulose 5-phosphate: R45 and H50. The active-site Proton acceptor is E70. A 1-deoxy-D-xylulose 5-phosphate-binding site is contributed by T100. H191 (proton donor) is an active-site residue. 3-amino-2-oxopropyl phosphate contacts are provided by residues G192 and 213–214 (GH).

It belongs to the PNP synthase family. Homooctamer; tetramer of dimers.

The protein resides in the cytoplasm. It catalyses the reaction 3-amino-2-oxopropyl phosphate + 1-deoxy-D-xylulose 5-phosphate = pyridoxine 5'-phosphate + phosphate + 2 H2O + H(+). It participates in cofactor biosynthesis; pyridoxine 5'-phosphate biosynthesis; pyridoxine 5'-phosphate from D-erythrose 4-phosphate: step 5/5. Functionally, catalyzes the complicated ring closure reaction between the two acyclic compounds 1-deoxy-D-xylulose-5-phosphate (DXP) and 3-amino-2-oxopropyl phosphate (1-amino-acetone-3-phosphate or AAP) to form pyridoxine 5'-phosphate (PNP) and inorganic phosphate. The polypeptide is Pyridoxine 5'-phosphate synthase (Nitrosospira multiformis (strain ATCC 25196 / NCIMB 11849 / C 71)).